The primary structure comprises 258 residues: Small ribosomal subunit protein uS3 (258 aa).

The KH type-2 domain maps to 16–85 (IDEYLEKELE…NPQVEVKEVD (70 aa)). Positions 198 to 258 (RVTETPAEEA…KDADGEESEK (61 aa)) are disordered. A compositionally biased stretch (acidic residues) spans 203-245 (PAEEASEASEVVEDLEEVEDLEEIEDLEEVEDLEEVEDLEDTE).

Belongs to the universal ribosomal protein uS3 family. In terms of assembly, part of the 30S ribosomal subunit.

Binds the lower part of the 30S subunit head. The protein is Small ribosomal subunit protein uS3 of Methanothermobacter thermautotrophicus (strain ATCC 29096 / DSM 1053 / JCM 10044 / NBRC 100330 / Delta H) (Methanobacterium thermoautotrophicum).